The following is a 1009-amino-acid chain: Chitin synthase 2 (1009 aa).

Polar residues-rich tracts occupy residues methionine 1–histidine 12 and glutamate 34–glutamine 62. Disordered stretches follow at residues methionine 1–glutamine 62 and aspartate 175–serine 234. The segment covering glutamate 192–threonine 202 has biased composition (acidic residues). 7 helical membrane-spanning segments follow: residues tryptophan 647 to threonine 667, phenylalanine 682 to valine 702, isoleucine 722 to serine 742, isoleucine 757 to valine 777, leucine 804 to phenylalanine 823, valine 930 to phenylalanine 950, and alanine 967 to isoleucine 987.

This sequence belongs to the chitin synthase family.

It is found in the cell membrane. It catalyses the reaction [(1-&gt;4)-N-acetyl-beta-D-glucosaminyl](n) + UDP-N-acetyl-alpha-D-glucosamine = [(1-&gt;4)-N-acetyl-beta-D-glucosaminyl](n+1) + UDP + H(+). Its function is as follows. Polymerizes chitin, a structural polymer of the cell wall and septum, by transferring the sugar moiety of UDP-GlcNAc to the non-reducing end of the growing chitin polymer. The chain is Chitin synthase 2 (CHS2) from Candida albicans (Yeast).